The chain runs to 322 residues: MSDSLIDLLLEIGKALIVLVGIVGAGAFMSFIERRLLALWQDRYGPNRVGPFGLLQLAADMIKMFFKEDWIPPFADRRIFVLAPIIAFTAFILAFAVVPITPTWGVADLNVGLLYILAIAGLAVYAVLFAGWSSNNKYSLLGSLRASAQTLSYEVFLGLSLMGIVIQTGSFNLRDIVEAQAGLWNVIPQILGFITFLFAGVAVTHRHPFDQPEAEQELADGYHIEYAGMKWGLFFVGEYIGIVLISSLIVTLFFGGWHGPWLPPFIWFALKTACFMVFFILLRASLPRPRFDQVMSFGWKVCLPLTLLNMLVTGAVVLMNAQ.

The next 8 helical transmembrane spans lie at 12–32 (IGKA…MSFI), 79–99 (IFVL…AVVP), 111–131 (VGLL…LFAG), 151–171 (LSYE…TGSF), 183–203 (LWNV…GVAV), 234–254 (FFVG…TLFF), 262–282 (LPPF…FILL), and 301–321 (VCLP…LMNA).

It belongs to the complex I subunit 1 family. As to quaternary structure, NDH-1 is composed of 14 different subunits. Subunits NuoA, H, J, K, L, M, N constitute the membrane sector of the complex.

The protein resides in the cell inner membrane. It carries out the reaction a quinone + NADH + 5 H(+)(in) = a quinol + NAD(+) + 4 H(+)(out). NDH-1 shuttles electrons from NADH, via FMN and iron-sulfur (Fe-S) centers, to quinones in the respiratory chain. The immediate electron acceptor for the enzyme in this species is believed to be ubiquinone. Couples the redox reaction to proton translocation (for every two electrons transferred, four hydrogen ions are translocated across the cytoplasmic membrane), and thus conserves the redox energy in a proton gradient. This subunit may bind ubiquinone. This is NADH-quinone oxidoreductase subunit H from Aeromonas hydrophila subsp. hydrophila (strain ATCC 7966 / DSM 30187 / BCRC 13018 / CCUG 14551 / JCM 1027 / KCTC 2358 / NCIMB 9240 / NCTC 8049).